We begin with the raw amino-acid sequence, 94 residues long: Small ribosomal subunit protein bS20 (94 aa).

This sequence belongs to the bacterial ribosomal protein bS20 family.

In terms of biological role, binds directly to 16S ribosomal RNA. The chain is Small ribosomal subunit protein bS20 from Aquifex aeolicus (strain VF5).